The primary structure comprises 231 residues: Large ribosomal subunit protein uL1 (231 aa).

This sequence belongs to the universal ribosomal protein uL1 family. Part of the 50S ribosomal subunit.

Binds directly to 23S rRNA. The L1 stalk is quite mobile in the ribosome, and is involved in E site tRNA release. In terms of biological role, protein L1 is also a translational repressor protein, it controls the translation of the L11 operon by binding to its mRNA. The chain is Large ribosomal subunit protein uL1 from Methylococcus capsulatus (strain ATCC 33009 / NCIMB 11132 / Bath).